We begin with the raw amino-acid sequence, 507 residues long: MAATEDGGEVDRGISGDALCRIVICNDASLRSQPVIYNPDFFVEKLRHENPEVFTELVVSNLTRLIDLPGTELAQLMGEVDPKLPGHNGAASSFFRSLNFLKRKEKGIVFGAPLTEEGIAQIYQLIDYLHKNLRTEGLFRIPGNSIRQQNLKDLLNSGMDIDVESGEFHPNDVATLLKMFLGELPEPLLTHRHYIAHLKIANLMLFDAKGNRTGVPDKERQIEALQLLFLLLPSPNRNLLKLLLDLLYQTARKQDRNKMSAHNLALMFAPHIIWPKNLTANDLQEHLIKLNNGVTFMIKHSQKLFKAPPYIREYARLHFSGSRTPASKDDLDLLPTRSPSEFHFLKHSKRSRLGSSPSSSTSLQEQTQQHTEEALKELFRHVHNMPDSAKKKRLIRQFNKNTPRTPVSDTQVPNGKKHVRSRTFSGMIKRKVLGSQMASEKKSRTITPQSADGSEYAKENLKYVSVDSPAVYFTRAKLKLSEDLQIRKEASSKSKKSHHKSTQETSI.

The Rho-GAP domain occupies 112-305; the sequence is APLTEEGIAQ…FMIKHSQKLF (194 aa). Disordered stretches follow at residues 344–371, 400–419, and 483–507; these read FLKHSKRSRLGSSPSSSTSLQEQTQQHT, KNTPRTPVSDTQVPNGKKHV, and DLQIRKEASSKSKKSHHKSTQETSI. A compositionally biased stretch (low complexity) spans 355-369; that stretch reads SSPSSSTSLQEQTQQ. The span at 400-413 shows a compositional bias: polar residues; that stretch reads KNTPRTPVSDTQVP. Residues 483-492 show a composition bias toward basic and acidic residues; sequence DLQIRKEASS.

Its function is as follows. GTPase activator for the Rho-type GTPases by converting them to an inactive GDP-bound state. This chain is Rho GTPase-activating protein 19 (arhgap19), found in Xenopus laevis (African clawed frog).